Consider the following 770-residue polypeptide: 1,4-alpha-glucan branching enzyme GlgB (770 aa).

Residue aspartate 433 is the Nucleophile of the active site. Glutamate 486 serves as the catalytic Proton donor.

Belongs to the glycosyl hydrolase 13 family. GlgB subfamily. As to quaternary structure, monomer.

It carries out the reaction Transfers a segment of a (1-&gt;4)-alpha-D-glucan chain to a primary hydroxy group in a similar glucan chain.. It participates in glycan biosynthesis; glycogen biosynthesis. Catalyzes the formation of the alpha-1,6-glucosidic linkages in glycogen by scission of a 1,4-alpha-linked oligosaccharide from growing alpha-1,4-glucan chains and the subsequent attachment of the oligosaccharide to the alpha-1,6 position. This is 1,4-alpha-glucan branching enzyme GlgB (glgB) from Synechocystis sp. (strain ATCC 27184 / PCC 6803 / Kazusa).